Reading from the N-terminus, the 630-residue chain is DNA mismatch repair protein MutL (630 aa).

Disordered stretches follow at residues 361-386 and 407-431; these read VLSS…APAE and FERK…GQAE. A compositionally biased stretch (basic and acidic residues) spans 407–421; sequence FERKQEEEVGEERCS.

It belongs to the DNA mismatch repair MutL/HexB family.

Its function is as follows. This protein is involved in the repair of mismatches in DNA. It is required for dam-dependent methyl-directed DNA mismatch repair. May act as a 'molecular matchmaker', a protein that promotes the formation of a stable complex between two or more DNA-binding proteins in an ATP-dependent manner without itself being part of a final effector complex. This Geobacillus kaustophilus (strain HTA426) protein is DNA mismatch repair protein MutL.